Consider the following 243-residue polypeptide: NAD-dependent protein deacylase SIR2rp3 (243 aa).

The 239-residue stretch at 1 to 239 folds into the Deacetylase sirtuin-type domain; sequence MKACRCITIL…PTWVDQVLKE (239 aa). Position 12–31 (12–31) interacts with NAD(+); the sequence is GAGISAESGISTFRDSNGLW. The substrate site is built by Tyr56 and Arg59. 95–98 provides a ligand contact to NAD(+); that stretch reads QNVD. His113 functions as the Proton acceptor in the catalytic mechanism. The Zn(2+) site is built by Cys121 and Cys141. NAD(+) is bound by residues 181 to 183 and Ala225; that span reads GTS.

It belongs to the sirtuin family. Class III subfamily. It depends on Zn(2+) as a cofactor.

It is found in the mitochondrion. The enzyme catalyses N(6)-malonyl-L-lysyl-[protein] + NAD(+) + H2O = 2''-O-malonyl-ADP-D-ribose + nicotinamide + L-lysyl-[protein]. It catalyses the reaction N(6)-succinyl-L-lysyl-[protein] + NAD(+) + H2O = 2''-O-succinyl-ADP-D-ribose + nicotinamide + L-lysyl-[protein]. The catalysed reaction is N(6)-glutaryl-L-lysyl-[protein] + NAD(+) + H2O = 2''-O-glutaryl-ADP-D-ribose + nicotinamide + L-lysyl-[protein]. Its function is as follows. NAD-dependent lysine demalonylase, desuccinylase and deglutarylase that specifically removes malonyl, succinyl and glutaryl groups on target proteins. Has weak NAD-dependent protein deacetylase activity; however this activity may not be physiologically relevant in vivo. This chain is NAD-dependent protein deacylase SIR2rp3 (SIR2rp3), found in Leishmania major.